Consider the following 432-residue polypeptide: Enolase (432 aa).

Glutamine 167 serves as a coordination point for (2R)-2-phosphoglycerate. Catalysis depends on glutamate 209, which acts as the Proton donor. Aspartate 246, glutamate 291, and aspartate 318 together coordinate Mg(2+). (2R)-2-phosphoglycerate contacts are provided by lysine 343, arginine 372, serine 373, and lysine 394. Residue lysine 343 is the Proton acceptor of the active site.

It belongs to the enolase family. As to quaternary structure, component of the RNA degradosome, a multiprotein complex involved in RNA processing and mRNA degradation. Mg(2+) serves as cofactor.

Its subcellular location is the cytoplasm. The protein localises to the secreted. It localises to the cell surface. The enzyme catalyses (2R)-2-phosphoglycerate = phosphoenolpyruvate + H2O. It participates in carbohydrate degradation; glycolysis; pyruvate from D-glyceraldehyde 3-phosphate: step 4/5. Functionally, catalyzes the reversible conversion of 2-phosphoglycerate (2-PG) into phosphoenolpyruvate (PEP). It is essential for the degradation of carbohydrates via glycolysis. This is Enolase from Aliivibrio fischeri (strain MJ11) (Vibrio fischeri).